Reading from the N-terminus, the 489-residue chain is 3-octaprenyl-4-hydroxybenzoate carboxy-lyase (489 aa).

Asparagine 172 is a Mn(2+) binding site. Residues valine 175–arginine 177, arginine 189–leucine 191, and arginine 194–glycine 195 each bind prenylated FMN. Glutamate 240 contributes to the Mn(2+) binding site. Aspartate 288 acts as the Proton donor in catalysis.

This sequence belongs to the UbiD family. In terms of assembly, homohexamer. It depends on prenylated FMN as a cofactor. The cofactor is Mn(2+).

It localises to the cell membrane. The enzyme catalyses a 4-hydroxy-3-(all-trans-polyprenyl)benzoate + H(+) = a 2-(all-trans-polyprenyl)phenol + CO2. It participates in cofactor biosynthesis; ubiquinone biosynthesis. Catalyzes the decarboxylation of 3-octaprenyl-4-hydroxy benzoate to 2-octaprenylphenol, an intermediate step in ubiquinone biosynthesis. The protein is 3-octaprenyl-4-hydroxybenzoate carboxy-lyase of Wigglesworthia glossinidia brevipalpis.